The primary structure comprises 192 residues: Phosphoheptose isomerase (192 aa).

In terms of domain architecture, SIS spans Leu37–Lys192. Asn52–Gly54 serves as a coordination point for substrate. Zn(2+) contacts are provided by His61 and Glu65. Residues Glu65, Asn93–Asp94, Ser119–Ser121, Ser124, and Gln172 contribute to the substrate site. The Zn(2+) site is built by Gln172 and His180.

It belongs to the SIS family. GmhA subfamily. As to quaternary structure, homotetramer. Requires Zn(2+) as cofactor.

It localises to the cytoplasm. The enzyme catalyses 2 D-sedoheptulose 7-phosphate = D-glycero-alpha-D-manno-heptose 7-phosphate + D-glycero-beta-D-manno-heptose 7-phosphate. Its pathway is carbohydrate biosynthesis; D-glycero-D-manno-heptose 7-phosphate biosynthesis; D-glycero-alpha-D-manno-heptose 7-phosphate and D-glycero-beta-D-manno-heptose 7-phosphate from sedoheptulose 7-phosphate: step 1/1. In terms of biological role, catalyzes the isomerization of sedoheptulose 7-phosphate in D-glycero-D-manno-heptose 7-phosphate. This Escherichia fergusonii (strain ATCC 35469 / DSM 13698 / CCUG 18766 / IAM 14443 / JCM 21226 / LMG 7866 / NBRC 102419 / NCTC 12128 / CDC 0568-73) protein is Phosphoheptose isomerase.